Reading from the N-terminus, the 101-residue chain is NAD(P)H-quinone oxidoreductase subunit 4L, chloroplastic (101 aa).

3 consecutive transmembrane segments (helical) span residues 2-22 (MFEY…YGLI), 32-52 (MCLE…SDLF), and 61-81 (IFSI…PAIV).

The protein belongs to the complex I subunit 4L family. In terms of assembly, NDH is composed of at least 16 different subunits, 5 of which are encoded in the nucleus.

The protein localises to the plastid. It is found in the chloroplast thylakoid membrane. The catalysed reaction is a plastoquinone + NADH + (n+1) H(+)(in) = a plastoquinol + NAD(+) + n H(+)(out). It catalyses the reaction a plastoquinone + NADPH + (n+1) H(+)(in) = a plastoquinol + NADP(+) + n H(+)(out). NDH shuttles electrons from NAD(P)H:plastoquinone, via FMN and iron-sulfur (Fe-S) centers, to quinones in the photosynthetic chain and possibly in a chloroplast respiratory chain. The immediate electron acceptor for the enzyme in this species is believed to be plastoquinone. Couples the redox reaction to proton translocation, and thus conserves the redox energy in a proton gradient. This chain is NAD(P)H-quinone oxidoreductase subunit 4L, chloroplastic, found in Amborella trichopoda.